Here is a 351-residue protein sequence, read N- to C-terminus: Nicotinate-nucleotide--dimethylbenzimidazole phosphoribosyltransferase (351 aa).

The active-site Proton acceptor is the Glu318.

The protein belongs to the CobT family.

The enzyme catalyses 5,6-dimethylbenzimidazole + nicotinate beta-D-ribonucleotide = alpha-ribazole 5'-phosphate + nicotinate + H(+). It functions in the pathway nucleoside biosynthesis; alpha-ribazole biosynthesis; alpha-ribazole from 5,6-dimethylbenzimidazole: step 1/2. Functionally, catalyzes the synthesis of alpha-ribazole-5'-phosphate from nicotinate mononucleotide (NAMN) and 5,6-dimethylbenzimidazole (DMB). The protein is Nicotinate-nucleotide--dimethylbenzimidazole phosphoribosyltransferase of Chloroflexus aurantiacus (strain ATCC 29366 / DSM 635 / J-10-fl).